The primary structure comprises 207 residues: FMN-dependent NADH:quinone oxidoreductase (207 aa).

Residues Ser10, 16 to 18 (SIS), 96 to 99 (MYNL), and 141 to 144 (SRGG) contribute to the FMN site.

It belongs to the azoreductase type 1 family. Homodimer. FMN is required as a cofactor.

The enzyme catalyses 2 a quinone + NADH + H(+) = 2 a 1,4-benzosemiquinone + NAD(+). The catalysed reaction is N,N-dimethyl-1,4-phenylenediamine + anthranilate + 2 NAD(+) = 2-(4-dimethylaminophenyl)diazenylbenzoate + 2 NADH + 2 H(+). Quinone reductase that provides resistance to thiol-specific stress caused by electrophilic quinones. In terms of biological role, also exhibits azoreductase activity. Catalyzes the reductive cleavage of the azo bond in aromatic azo compounds to the corresponding amines. The chain is FMN-dependent NADH:quinone oxidoreductase from Nostoc sp. (strain PCC 7120 / SAG 25.82 / UTEX 2576).